A 20-amino-acid polypeptide reads, in one-letter code: Collagenolytic protease 28 kDa (20 aa).

One can recognise a Peptidase S1 domain in the interval 1-20 (IVGGQEASPGSWPXQVGLFF).

It belongs to the peptidase S1 family.

The enzyme catalyses Hydrolysis of proteins, with broad specificity for peptide bonds. Native collagen is cleaved about 75% of the length of the molecule from the N-terminus. Low activity on small molecule substrates of both trypsin and chymotrypsin.. This enzyme is a serine protease capable of degrading the native triple helix of collagen. The sequence is that of Collagenolytic protease 28 kDa from Paralithodes camtschaticus (Red king crab).